Reading from the N-terminus, the 404-residue chain is Cysteine desulfurase IscS (404 aa).

Residues 75–76 (AT), asparagine 155, glutamine 183, and 203–205 (SAH) each bind pyridoxal 5'-phosphate. Residue lysine 206 is modified to N6-(pyridoxal phosphate)lysine. Threonine 243 is a binding site for pyridoxal 5'-phosphate. Cysteine 328 functions as the Cysteine persulfide intermediate in the catalytic mechanism. Cysteine 328 provides a ligand contact to [2Fe-2S] cluster.

It belongs to the class-V pyridoxal-phosphate-dependent aminotransferase family. NifS/IscS subfamily. In terms of assembly, homodimer. Forms a heterotetramer with IscU, interacts with other sulfur acceptors. The cofactor is pyridoxal 5'-phosphate.

Its subcellular location is the cytoplasm. The enzyme catalyses (sulfur carrier)-H + L-cysteine = (sulfur carrier)-SH + L-alanine. It functions in the pathway cofactor biosynthesis; iron-sulfur cluster biosynthesis. In terms of biological role, master enzyme that delivers sulfur to a number of partners involved in Fe-S cluster assembly, tRNA modification or cofactor biosynthesis. Catalyzes the removal of elemental sulfur atoms from cysteine to produce alanine. Functions as a sulfur delivery protein for Fe-S cluster synthesis onto IscU, an Fe-S scaffold assembly protein, as well as other S acceptor proteins. The polypeptide is Cysteine desulfurase IscS (Pseudomonas aeruginosa (strain UCBPP-PA14)).